The following is a 103-amino-acid chain: Small ribosomal subunit protein uS10 (103 aa).

It belongs to the universal ribosomal protein uS10 family. Part of the 30S ribosomal subunit.

Functionally, involved in the binding of tRNA to the ribosomes. In Xylella fastidiosa (strain 9a5c), this protein is Small ribosomal subunit protein uS10.